A 181-amino-acid polypeptide reads, in one-letter code: Probable GTP-binding protein EngB (181 aa).

The region spanning 18 to 181 is the EngB-type G domain; the sequence is PKNEICFVGR…LQDLVNNLFN (164 aa). GTP is bound by residues 26–33, 52–56, 70–73, 137–140, and 164–166; these read GRSNVGKS, GKTKL, DLPG, TKRD, and VSI. Mg(2+) is bound by residues S33 and T54.

This sequence belongs to the TRAFAC class TrmE-Era-EngA-EngB-Septin-like GTPase superfamily. EngB GTPase family. It depends on Mg(2+) as a cofactor.

Necessary for normal cell division and for the maintenance of normal septation. The sequence is that of Probable GTP-binding protein EngB from Mycoplasma mobile (strain ATCC 43663 / 163K / NCTC 11711) (Mesomycoplasma mobile).